Reading from the N-terminus, the 899-residue chain is Protein translocase subunit SecA (899 aa).

ATP-binding positions include Q87, 105–109, and D512; that span reads GEGKT. The interval 846–899 is disordered; that stretch reads MEEEQQQQAQKKIVFNLGEEPATAPQPARSKKSASRNDPCPCGSGKKYKKCCGK. Zn(2+) contacts are provided by C885, C887, C896, and C897.

Belongs to the SecA family. Monomer and homodimer. Part of the essential Sec protein translocation apparatus which comprises SecA, SecYEG and auxiliary proteins SecDF-YajC and YidC. The cofactor is Zn(2+).

It is found in the cell inner membrane. It localises to the cytoplasm. The enzyme catalyses ATP + H2O + cellular proteinSide 1 = ADP + phosphate + cellular proteinSide 2.. Functionally, part of the Sec protein translocase complex. Interacts with the SecYEG preprotein conducting channel. Has a central role in coupling the hydrolysis of ATP to the transfer of proteins into and across the cell membrane, serving as an ATP-driven molecular motor driving the stepwise translocation of polypeptide chains across the membrane. The polypeptide is Protein translocase subunit SecA (Geobacter metallireducens (strain ATCC 53774 / DSM 7210 / GS-15)).